The primary structure comprises 538 residues: CWF19-like protein 1 (538 aa).

Disordered stretches follow at residues 259–278 (PDVT…TGKQ) and 298–324 (QGRK…PPQP).

Belongs to the CWF19 family.

The chain is CWF19-like protein 1 (CWF19L1) from Pongo abelii (Sumatran orangutan).